Reading from the N-terminus, the 141-residue chain is Putative pre-16S rRNA nuclease (141 aa).

The protein belongs to the YqgF nuclease family.

Its subcellular location is the cytoplasm. Its function is as follows. Could be a nuclease involved in processing of the 5'-end of pre-16S rRNA. The chain is Putative pre-16S rRNA nuclease from Aliivibrio fischeri (strain ATCC 700601 / ES114) (Vibrio fischeri).